The chain runs to 250 residues: Cobalt transport protein CbiM (250 aa).

Positions 1-26 (MNKKEKRIVAIAAAFALCFGISPAVN) are cleaved as a signal peptide. A run of 6 helical transmembrane segments spans residues 38–58 (KYCITWGILSIPFLVAGYFSI), 68–88 (SITMLAMAGAFVFVLSSLKIP), 102–122 (LGAILFGPSAVSILGIIVLIF), 134–154 (TLGANTFSMAIAGPFVSFGIY), 165–185 (LSGIFLAAFVGDLFTYCVTSI), and 209–229 (FAPTQVPLAIIEGILTVVIMI).

It belongs to the CbiM family. In terms of assembly, forms an energy-coupling factor (ECF) transporter complex composed of an ATP-binding protein (A component, CbiO), a transmembrane protein (T component, CbiQ) and 2 possible substrate-capture proteins (S components, CbiM and CbiN) of unknown stoichimetry.

It localises to the cell membrane. It participates in cofactor biosynthesis; adenosylcobalamin biosynthesis. Part of the energy-coupling factor (ECF) transporter complex CbiMNOQ involved in cobalt import. This is Cobalt transport protein CbiM from Lachnoclostridium phytofermentans (strain ATCC 700394 / DSM 18823 / ISDg) (Clostridium phytofermentans).